The following is a 277-amino-acid chain: Bifunctional protein FolD (277 aa).

Residues 164 to 166 (GRS), Ser189, and Val230 contribute to the NADP(+) site.

The protein belongs to the tetrahydrofolate dehydrogenase/cyclohydrolase family. In terms of assembly, homodimer.

The catalysed reaction is (6R)-5,10-methylene-5,6,7,8-tetrahydrofolate + NADP(+) = (6R)-5,10-methenyltetrahydrofolate + NADPH. It catalyses the reaction (6R)-5,10-methenyltetrahydrofolate + H2O = (6R)-10-formyltetrahydrofolate + H(+). Its pathway is one-carbon metabolism; tetrahydrofolate interconversion. Catalyzes the oxidation of 5,10-methylenetetrahydrofolate to 5,10-methenyltetrahydrofolate and then the hydrolysis of 5,10-methenyltetrahydrofolate to 10-formyltetrahydrofolate. The chain is Bifunctional protein FolD from Exiguobacterium sibiricum (strain DSM 17290 / CCUG 55495 / CIP 109462 / JCM 13490 / 255-15).